The primary structure comprises 864 residues: MEDKNKTIKETLQGAADAGKRKKLIIKKKGDENSAPSSASPKKETIAESAPVKPLTPLPSRGDSGQSPIVRPAPSASKEVKYEESSRKQDSGQSGSRPLRDKDSQVRPSGDSSYPVSRSPFQKEDSNIIVSRPTQRPVRPNPGGSYQGNRGPGQGGGYQGNRGPGQGGGYQGNRGPGQGGGYQGNRGPGQQTGPGNRFGGSGPGNRSGGPGGRPMPITSAEVELSQARGSTGASKKKGHDKEKTSSDKRDFSGAENTKFFKQRFKKTKVVGVSGVSVPKEITVLENVQVGELAKKMNLKPGDVIGKLMKMGMMVTINNIIDAETAALLADEYGCKVKVVSLYEETIIEEEKDNEGDYINRPPVVTIMGHVDHGKTKLLDTIRRSSVIDTESGGITQHIGAYQVKTARGLITFLDTPGHEAFTSMRARGAKVTDIVILVVAADDGVMPQTLEAISHAKAAEVPIIVAINKIDLPTANPDKIMQELANHGLQSEEWGGQTMYVKISARENIGIDKLLEVILLQAEVMDLKANPKRRAKGTIIEAKLDPGRGSVATVLIQNGTLRVGDPFVAGVFSGRVRAMYNDLGQLIEEAGPAFPAQVTGIDGVPDAGAPFDAMADEKEARNISQHRIEFEKIGNAGAAAGTTSKVTLENMNEYIKLGALKELKVIIKADVRGSAEAIKESLEKLSTPEVKLNVIQSGAGAIVDMDVMLASASNALIIGFHVRANPKTIALAEKEQVQIKYYNIIYQVVDEIKLAMEGLLEPEKIEEVIGTAEIREIFKVSKIGNIAGCMVTSGKIQKSANVRVISDGVTKFDGKLKSLKRVKDDVNDVVSGFECGIQVDGYNDFKVGDTIEAYNVTVIKRKLE.

Residues 1-252 form a disordered region; it reads MEDKNKTIKE…KTSSDKRDFS (252 aa). Residues 78–90 are compositionally biased toward basic and acidic residues; it reads KEVKYEESSRKQD. Over residues 106–120 the composition is skewed to polar residues; it reads VRPSGDSSYPVSRSP. The segment covering 150 to 212 has biased composition (gly residues); the sequence is RGPGQGGGYQ…PGNRSGGPGG (63 aa). Positions 239–252 are enriched in basic and acidic residues; that stretch reads HDKEKTSSDKRDFS. The 170-residue stretch at 359-528 folds into the tr-type G domain; sequence NRPPVVTIMG…LLQAEVMDLK (170 aa). Positions 368–375 are G1; it reads GHVDHGKT. 368-375 lines the GTP pocket; that stretch reads GHVDHGKT. A G2 region spans residues 393 to 397; it reads GITQH. A G3 region spans residues 414-417; the sequence is DTPG. Residues 414-418 and 468-471 contribute to the GTP site; these read DTPGH and NKID. The G4 stretch occupies residues 468-471; sequence NKID. The interval 504–506 is G5; sequence SAR.

The protein belongs to the TRAFAC class translation factor GTPase superfamily. Classic translation factor GTPase family. IF-2 subfamily.

It localises to the cytoplasm. Functionally, one of the essential components for the initiation of protein synthesis. Protects formylmethionyl-tRNA from spontaneous hydrolysis and promotes its binding to the 30S ribosomal subunits. Also involved in the hydrolysis of GTP during the formation of the 70S ribosomal complex. This Leptospira borgpetersenii serovar Hardjo-bovis (strain L550) protein is Translation initiation factor IF-2.